A 231-amino-acid chain; its full sequence is NKG2-C type II integral membrane protein (231 aa).

Residues 1 to 12 (MNKQRGTFSEVS) are compositionally biased toward polar residues. The segment at 1 to 31 (MNKQRGTFSEVSLAQDPKRQQRKPKDNKSSI) is disordered. The Cytoplasmic portion of the chain corresponds to 1–70 (MNKQRGTFSE…CQGLLPPPEK (70 aa)). Basic and acidic residues predominate over residues 16 to 28 (DPKRQQRKPKDNK). The chain crosses the membrane as a helical; Signal-anchor for type II membrane protein span at residues 71–93 (LTAEVLGIICIVLMATVLKTVVL). Over 94-231 (IPFLEQNNSF…SKRYYCKHKL (138 aa)) the chain is Extracellular. N-linked (GlcNAc...) asparagine glycosylation occurs at Asn-100. A C-type lectin domain is found at 116–229 (HCPEEWITYS…GSSKRYYCKH (114 aa)). 3 disulfides stabilise this stretch: Cys-117–Cys-128, Cys-145–Cys-227, and Cys-206–Cys-219. The N-linked (GlcNAc...) asparagine glycan is linked to Asn-149.

As to quaternary structure, heterodimer with KLRD1; disulfide-linked. KLRD1-KLRC2 receptor complex interacts with TYROBP/DAP12 homodimer; this interaction is necessary for the expression on the cell surface. Natural killer cells.

It is found in the cell membrane. Its function is as follows. Immune activating receptor involved in self-nonself discrimination. In complex with KLRD1 on cytotoxic lymphocyte subsets, recognizes non-classical major histocompatibility MHC-E loaded with signal sequence-derived peptides from non-classical MHC-G molecules, likely playing a role in the generation and effector functions of adaptive natural killer (NK) cells and in maternal-fetal tolerance during pregnancy. Regulates the effector functions of terminally differentiated cytotoxic lymphocyte subsets, and in particular may play a role in adaptive NK cell response to viral infection. Upon MHC-E-peptide binding, transmits intracellular signals via the adapter protein TYROBP/DAP12, triggering the phosphorylation of proximal signaling molecules and cell activation. This is NKG2-C type II integral membrane protein (KLRC2) from Macaca mulatta (Rhesus macaque).